We begin with the raw amino-acid sequence, 105 residues long: Large ribosomal subunit protein uL24 (105 aa).

Belongs to the universal ribosomal protein uL24 family. In terms of assembly, part of the 50S ribosomal subunit.

In terms of biological role, one of two assembly initiator proteins, it binds directly to the 5'-end of the 23S rRNA, where it nucleates assembly of the 50S subunit. Functionally, one of the proteins that surrounds the polypeptide exit tunnel on the outside of the subunit. This is Large ribosomal subunit protein uL24 from Aliivibrio salmonicida (strain LFI1238) (Vibrio salmonicida (strain LFI1238)).